Reading from the N-terminus, the 550-residue chain is Chaperonin GroEL (550 aa).

Residues 29–32, Lys50, 86–90, Gly414, and Asp495 each bind ATP; these read TLGP and DGTTT.

Belongs to the chaperonin (HSP60) family. As to quaternary structure, forms a cylinder of 14 subunits composed of two heptameric rings stacked back-to-back. Interacts with the co-chaperonin GroES.

The protein resides in the cytoplasm. It carries out the reaction ATP + H2O + a folded polypeptide = ADP + phosphate + an unfolded polypeptide.. Together with its co-chaperonin GroES, plays an essential role in assisting protein folding. The GroEL-GroES system forms a nano-cage that allows encapsulation of the non-native substrate proteins and provides a physical environment optimized to promote and accelerate protein folding. In Parvibaculum lavamentivorans (strain DS-1 / DSM 13023 / NCIMB 13966), this protein is Chaperonin GroEL.